The primary structure comprises 223 residues: Voltage-dependent calcium channel gamma-1 subunit (223 aa).

Topologically, residues 1-10 are cytoplasmic; sequence MSQTKTAKVR. The chain crosses the membrane as a helical span at residues 11 to 29; that stretch reads VTLFFILVGGVLAMVAVVT. Residues 30–109 are Extracellular-facing; that stretch reads DHWAVLSPHL…TQKEYSISAA (80 aa). Asn43 and Asn80 each carry an N-linked (GlcNAc...) asparagine glycan. A disulfide bridge connects residues Cys57 and Cys81. The helical transmembrane segment at 110 to 130 threads the bilayer; sequence AIAIFSLGFIIVGSICAFLSF. Residues 131–135 are Cytoplasmic-facing; that stretch reads GNKRD. Residues 136–156 form a helical membrane-spanning segment; the sequence is YLLRPASMFYAFAGLCLIVSV. Residues 157 to 180 lie on the Extracellular side of the membrane; the sequence is EVMRQSVKRMIDSEDTVWIEHYYS. The helical transmembrane segment at 181–205 threads the bilayer; it reads WSFACACAAFILLFLGGLFLLLFSL. Residues 206-223 are Cytoplasmic-facing; it reads PRMPQNPWESCMDAEPEH.

It belongs to the PMP-22/EMP/MP20 family. CACNG subfamily. Component of a calcium channel complex consisting of a pore-forming alpha subunit (CACNA1S) and the ancillary subunits CACNB1 or CACNB2, CACNG1 and CACNA2D1. The channel complex contains alpha, beta, gamma and delta subunits in a 1:1:1:1 ratio, i.e. it contains either CACNB1 or CACNB2. N-glycosylated. Detected in skeletal muscle (at protein level).

It localises to the cell membrane. The protein localises to the sarcolemma. Its function is as follows. Regulatory subunit of the voltage-gated calcium channel that gives rise to L-type calcium currents in skeletal muscle. Regulates channel inactivation kinetics. This chain is Voltage-dependent calcium channel gamma-1 subunit (Cacng1), found in Mus musculus (Mouse).